Reading from the N-terminus, the 887-residue chain is Tubulin polyglutamylase TTLL7 (887 aa).

Positions 1 to 21 (MPSLPQEGVIQGPSPLDLNTE) are disordered. Residues 38–390 (KGTITANVAG…RTSDKRRNLA (353 aa)) enclose the TTL domain. Residues Lys-160, 166–167 (MG), 188–191 (QEYI), and 201–203 (KFD) each bind ATP. Arg-227 is a binding site for L-glutamate. 249 to 250 (TN) lines the ATP pocket. Residues Tyr-251, Ser-252, and Lys-271 each coordinate L-glutamate. Mg(2+)-binding residues include Asp-336, Glu-349, and Asn-351. Lys-367 provides a ligand contact to L-glutamate. The interval 388-450 (NLAKQKAEAQ…ISREEHENRH (63 aa)) is c-MTBD region. Disordered stretches follow at residues 519-621 (MGKT…TRPF) and 651-676 (LPHSNDACSTNSQVSESLRQLKTKEQ). Positions 548-560 (SSDSSYDSSSSSS) are enriched in low complexity. Composition is skewed to polar residues over residues 593–621 (QQPSSIRRSVSCPRSISAQSPSSGDTRPF) and 656–670 (DACSTNSQVSESLRQ).

The protein belongs to the tubulin--tyrosine ligase family. Interacts with both alpha- and beta-tubulin (via C-terminal tubulin tails). The cofactor is Mg(2+). As to expression, highly expressed in the nervous system including spinal cord, thalamus, hippocampus, hypothalamus and cerebellum.

Its subcellular location is the cell projection. The protein localises to the cilium. It is found in the cytoplasm. It localises to the cytoskeleton. The protein resides in the cilium basal body. Its subcellular location is the dendrite. The protein localises to the perikaryon. It catalyses the reaction L-glutamyl-[protein] + L-glutamate + ATP = gamma-L-glutamyl-L-glutamyl-[protein] + ADP + phosphate + H(+). The catalysed reaction is (L-glutamyl)(n)-gamma-L-glutamyl-L-glutamyl-[protein] + L-glutamate + ATP = (L-glutamyl)(n+1)-gamma-L-glutamyl-L-glutamyl-[protein] + ADP + phosphate + H(+). Polyglutamylase which modifies tubulin, generating polyglutamate side chains of variable lengths on the gamma-carboxyl group of specific glutamate residues within the C-terminal tail of tubulin. Mediates both ATP-dependent initiation and elongation steps of the polyglutamylation reaction. Preferentially modifies the beta-tubulin tail over an alpha-tail. Competes with monoglycylase TTLL3 for modification site on beta-tubulin substrate, thereby creating an anticorrelation between glycylation and glutamylation reactions. Required for neurite growth; responsible for the strong increase in tubulin polyglutamylation during postnatal neuronal maturation. The sequence is that of Tubulin polyglutamylase TTLL7 from Homo sapiens (Human).